The primary structure comprises 937 residues: Protocadherin alpha-7 (937 aa).

The first 29 residues, methionine 1–glycine 29, serve as a signal peptide directing secretion. 6 Cadherin domains span residues glutamine 30–phenylalanine 133, proline 134–phenylalanine 242, aspartate 243–leucine 350, threonine 351–phenylalanine 455, alanine 456–leucine 565, and valine 581–alanine 678. Residues glutamine 30–asparagine 697 are Extracellular-facing. Cysteine 96 and cysteine 102 are disulfide-bonded. 2 N-linked (GlcNAc...) asparagine glycosylation sites follow: asparagine 254 and asparagine 265. Asparagine 548 carries N-linked (GlcNAc...) asparagine glycosylation. Residues valine 698–tyrosine 718 form a helical membrane-spanning segment. Residues threonine 719–glutamine 937 lie on the Cytoplasmic side of the membrane. Disordered stretches follow at residues arginine 755 to tyrosine 795 and isoleucine 814 to glutamine 937. 5 PXXP repeats span residues proline 774–proline 777, proline 786–proline 789, proline 819–proline 822, proline 860–proline 863, and proline 878–proline 881. The tract at residues proline 774–proline 881 is 5 X 4 AA repeats of P-X-X-P. The span at serine 775–arginine 787 shows a compositional bias: polar residues. Positions aspartate 896–lysine 910 are enriched in basic and acidic residues.

As to quaternary structure, forms homodimers in trans (molecules expressed by two different cells). Forms promiscuous heterodimers in cis (at the plasma membrane of the same cell) with other protocadherins.

The protein localises to the cell membrane. Its function is as follows. Calcium-dependent cell-adhesion protein involved in cells self-recognition and non-self discrimination. Thereby, it is involved in the establishment and maintenance of specific neuronal connections in the brain. This chain is Protocadherin alpha-7, found in Homo sapiens (Human).